The primary structure comprises 365 residues: Alanine racemase (365 aa).

K32 serves as the catalytic Proton acceptor; specific for D-alanine. The residue at position 32 (K32) is an N6-(pyridoxal phosphate)lysine. R128 is a binding site for substrate. Residue Y257 is the Proton acceptor; specific for L-alanine of the active site. Residue M305 coordinates substrate.

It belongs to the alanine racemase family. Requires pyridoxal 5'-phosphate as cofactor.

It catalyses the reaction L-alanine = D-alanine. It participates in amino-acid biosynthesis; D-alanine biosynthesis; D-alanine from L-alanine: step 1/1. Functionally, catalyzes the interconversion of L-alanine and D-alanine. May also act on other amino acids. The polypeptide is Alanine racemase (alr) (Francisella tularensis subsp. mediasiatica (strain FSC147)).